A 642-amino-acid chain; its full sequence is Arginine--tRNA ligase (642 aa).

A 'HIGH' region motif is present at residues 133 to 143; that stretch reads VNPTKPLHMGH.

Belongs to the class-I aminoacyl-tRNA synthetase family.

The protein localises to the cytoplasm. The enzyme catalyses tRNA(Arg) + L-arginine + ATP = L-arginyl-tRNA(Arg) + AMP + diphosphate. In Thermococcus kodakarensis (strain ATCC BAA-918 / JCM 12380 / KOD1) (Pyrococcus kodakaraensis (strain KOD1)), this protein is Arginine--tRNA ligase.